We begin with the raw amino-acid sequence, 408 residues long: Leucine aminopeptidase 1 (408 aa).

A signal peptide spans 1-16; sequence MKVSSAIALLLPVVAA. Residues 17-89 constitute a propeptide that is removed on maturation; that stretch reads RFVDSAFEQD…SAQSATTGPA (73 aa). 3 N-linked (GlcNAc...) asparagine glycosylation sites follow: Asn-95, Asn-108, and Asn-182. 4 residues coordinate Zn(2+): His-190, Asp-209, Glu-248, and Asp-275. A disulfide bond links Cys-324 and Cys-328. His-357 contributes to the Zn(2+) binding site.

The protein belongs to the peptidase M28 family. M28E subfamily. In terms of assembly, monomer. Zn(2+) serves as cofactor.

It localises to the secreted. Its function is as follows. Extracellular aminopeptidase that allows assimilation of proteinaceous substrates. The chain is Leucine aminopeptidase 1 (LAP1) from Grosmannia clavigera (strain kw1407 / UAMH 11150) (Blue stain fungus).